Here is a 228-residue protein sequence, read N- to C-terminus: 3-dehydroquinate dehydratase (228 aa).

3-dehydroquinate contacts are provided by residues 30 to 32 (EWR) and arginine 62. The Proton donor/acceptor role is filled by histidine 118. Lysine 143 acts as the Schiff-base intermediate with substrate in catalysis. Residues arginine 186, serine 205, and glutamine 209 each coordinate 3-dehydroquinate.

It belongs to the type-I 3-dehydroquinase family. Homodimer.

It catalyses the reaction 3-dehydroquinate = 3-dehydroshikimate + H2O. Its pathway is metabolic intermediate biosynthesis; chorismate biosynthesis; chorismate from D-erythrose 4-phosphate and phosphoenolpyruvate: step 3/7. Involved in the third step of the chorismate pathway, which leads to the biosynthesis of aromatic amino acids. Catalyzes the cis-dehydration of 3-dehydroquinate (DHQ) and introduces the first double bond of the aromatic ring to yield 3-dehydroshikimate. The protein is 3-dehydroquinate dehydratase of Streptococcus pyogenes serotype M12 (strain MGAS9429).